Reading from the N-terminus, the 484-residue chain is Probable glycine dehydrogenase (decarboxylating) subunit 2 (484 aa).

Lys-264 carries the N6-(pyridoxal phosphate)lysine modification.

Belongs to the GcvP family. C-terminal subunit subfamily. In terms of assembly, the glycine cleavage system is composed of four proteins: P, T, L and H. In this organism, the P 'protein' is a heterodimer of two subunits. Requires pyridoxal 5'-phosphate as cofactor.

It catalyses the reaction N(6)-[(R)-lipoyl]-L-lysyl-[glycine-cleavage complex H protein] + glycine + H(+) = N(6)-[(R)-S(8)-aminomethyldihydrolipoyl]-L-lysyl-[glycine-cleavage complex H protein] + CO2. In terms of biological role, the glycine cleavage system catalyzes the degradation of glycine. The P protein binds the alpha-amino group of glycine through its pyridoxal phosphate cofactor; CO(2) is released and the remaining methylamine moiety is then transferred to the lipoamide cofactor of the H protein. The chain is Probable glycine dehydrogenase (decarboxylating) subunit 2 from Legionella pneumophila (strain Paris).